The sequence spans 569 residues: MKQSKLFIPTLKEVPNSAEAKSHRMMLRAGYIHQVSAGVYSYLPLAYRVLENIQAIIKDEMSKIDAVQMQMPGILPAELWEESGRYATYGPNLFKFKDRHSRDFILGPTHEETFADLVRNNIKSYKKLPLTLYQIQTKYRDEDRPRYGLLRGREFIMQDAYSFSANEADLDTTFQQMRQAYTNIFERCGLDFRAIVGDAGAMGGKDSMEFSAIAEIGEDTIVYSDQSDYAANLEMATGVRPGQSSTDVQLEMEKVATGDAHSIEEVAARLEVPAQKIIKSVLFIADEKPVLVLVRGDYEVNDVKLKNFLDADFLDLATAEQVQATMNAPMGSIGPVNAPEDVQIVADYSVEALVNAVVGANEADHHFLNVNSKRDFNVADYADLRFVQEGETAPDGEGKLQFTKGIEIGHIFKLGTRYTEQFGATFLDENGRAKPIIMGSYGIGVSRLLSAITEQQADENGLVWPSAIAPYDLHVVPVNVKDDAQVELAEQIEGLLEEAGYSVLVDDRKERAGVKFADSDLIGLPIRITVGKKAAEEIVEVKLRKTGETLEVKKDELINSLSILLASEK.

Belongs to the class-II aminoacyl-tRNA synthetase family. ProS type 1 subfamily. As to quaternary structure, homodimer.

Its subcellular location is the cytoplasm. It carries out the reaction tRNA(Pro) + L-proline + ATP = L-prolyl-tRNA(Pro) + AMP + diphosphate. Functionally, catalyzes the attachment of proline to tRNA(Pro) in a two-step reaction: proline is first activated by ATP to form Pro-AMP and then transferred to the acceptor end of tRNA(Pro). As ProRS can inadvertently accommodate and process non-cognate amino acids such as alanine and cysteine, to avoid such errors it has two additional distinct editing activities against alanine. One activity is designated as 'pretransfer' editing and involves the tRNA(Pro)-independent hydrolysis of activated Ala-AMP. The other activity is designated 'posttransfer' editing and involves deacylation of mischarged Ala-tRNA(Pro). The misacylated Cys-tRNA(Pro) is not edited by ProRS. The sequence is that of Proline--tRNA ligase from Latilactobacillus sakei subsp. sakei (strain 23K) (Lactobacillus sakei subsp. sakei).